Reading from the N-terminus, the 1040-residue chain is Multidrug resistance protein MdtB (1040 aa).

The next 12 membrane-spanning stretches (helical) occupy residues 16-36, 347-367, 369-389, 396-416, 440-460, 472-492, 537-557, 863-883, 888-908, 911-931, 968-988, and 998-1018; these read FIMR…AGII, LMMA…NIPA, IIPG…MVFL, LTLM…IVVI, IGFT…PLLF, FAIT…TLTP, WLTL…WVFI, LGST…VLGI, FIHP…ALLA, IAGS…IGIV, ILMT…STGV, and IGMV…TPVI.

It belongs to the resistance-nodulation-cell division (RND) (TC 2.A.6) family. MdtB subfamily. As to quaternary structure, part of a tripartite efflux system composed of MdtA, MdtB and MdtC. MdtB forms a heteromultimer with MdtC.

The protein resides in the cell inner membrane. The MdtABC tripartite complex confers resistance against novobiocin and deoxycholate. The polypeptide is Multidrug resistance protein MdtB (Escherichia coli (strain 55989 / EAEC)).